A 386-amino-acid polypeptide reads, in one-letter code: GTPase Obg (386 aa).

Positions 4 to 162 constitute an Obg domain; sequence SNFVDYVKIY…MTVILELKLL (159 aa). Positions 18–45 are disordered; the sequence is KGGRGSTHMRREKYTPNGGPDGGDGGRG. Residues 36-45 are compositionally biased toward gly residues; that stretch reads GPDGGDGGRG. The OBG-type G domain maps to 163–329; that stretch reads ADVGLVGFPN…LKDILWTELN (167 aa). GTP is bound by residues 169–176, 194–198, 216–219, 283–286, and 310–312; these read GFPNAGKS, FTTLE, DIPG, TKSD, and SSV. Residues serine 176 and threonine 196 each coordinate Mg(2+). The segment at 351-386 is disordered; it reads ELKDMGEDEELDYEYEDDGDEDDLDYEYEEEDWEDK. The segment covering 356-386 has biased composition (acidic residues); sequence GEDEELDYEYEDDGDEDDLDYEYEEEDWEDK.

The protein belongs to the TRAFAC class OBG-HflX-like GTPase superfamily. OBG GTPase family. As to quaternary structure, monomer. Mg(2+) serves as cofactor.

The protein resides in the cytoplasm. An essential GTPase which binds GTP, GDP and possibly (p)ppGpp with moderate affinity, with high nucleotide exchange rates and a fairly low GTP hydrolysis rate. Plays a role in control of the cell cycle, stress response, ribosome biogenesis and in those bacteria that undergo differentiation, in morphogenesis control. The polypeptide is GTPase Obg (Bacteroides fragilis (strain YCH46)).